Here is a 369-residue protein sequence, read N- to C-terminus: UPF0324 membrane protein DVU_0543 (369 aa).

A run of 9 helical transmembrane segments spans residues 13–31 (IVPGLLVMVGTLYVLRTYV), 46–65 (WLVQVLSLNYILLSILTGMF), 110–132 (GGVAITLIVAFVFGTAIFIMWLG), 142–164 (TATMAAACGVCGVSAAVATAPGV), 171–193 (LALSIATILGFGIMTMFVSPFIG), 240–262 (WNVVRVICIPFVVFFITAWYWKG), 269–291 (TSLGSILASKFPIFVLGFVGMTA), 306–328 (LHLMRDVMAWIFGVGLVGLGAYI), and 341–363 (LRIGLIAGMVKYILALIIILAFI).

It belongs to the UPF0324 family.

The protein resides in the cell membrane. The polypeptide is UPF0324 membrane protein DVU_0543 (Nitratidesulfovibrio vulgaris (strain ATCC 29579 / DSM 644 / CCUG 34227 / NCIMB 8303 / VKM B-1760 / Hildenborough) (Desulfovibrio vulgaris)).